Consider the following 349-residue polypeptide: GTPase Obg (349 aa).

One can recognise an Obg domain in the interval 1–159 (MKFLDEAKVY…RWIWLRLKLI (159 aa)). The OBG-type G domain occupies 160–327 (ADAGLVGLPN…ALRALVEVIG (168 aa)). GTP is bound by residues 166-173 (GLPNAGKS), 191-195 (FTTLH), 212-215 (DIPG), 279-282 (NKID), and 308-310 (SGV). Ser173 and Thr193 together coordinate Mg(2+).

The protein belongs to the TRAFAC class OBG-HflX-like GTPase superfamily. OBG GTPase family. Monomer. Mg(2+) is required as a cofactor.

It is found in the cytoplasm. In terms of biological role, an essential GTPase which binds GTP, GDP and possibly (p)ppGpp with moderate affinity, with high nucleotide exchange rates and a fairly low GTP hydrolysis rate. Plays a role in control of the cell cycle, stress response, ribosome biogenesis and in those bacteria that undergo differentiation, in morphogenesis control. The chain is GTPase Obg from Rhodopseudomonas palustris (strain BisB18).